We begin with the raw amino-acid sequence, 416 residues long: MPRQLSAAAVLFASLAVILHDGSQMRAKAFPKTRDYSQPTAAATGQDIAKPVQQPANQAPHQTLAARLMDGHITFQTAATIKTPTTTPVTTKNTPTTSPIIYTLVTTQATSNNSHTAPPLTKVTVGPSLAPYSLPPTITPPAHTTGTSSSTVNHTTGNATQPSNQTTLPATLSIAPHKSTTGQKPVQPTHAPGTTAAAHNTTRTAAPASTVPGSTLAPQPSSIKTGIYQVLNGSRLCIKAEMGIQLIVQDKESVFSPRRYFNLDPNATQASGNCGTRNSNLLLNFQGGFVNLTFTKDEGSYYISEVGACLTVSDPETIYQGMKHAVVMFQTVVGHSFKCVSEQSLQLSAHLQLKTTNVQLQAFDFEDDHFGNVDECSSDYTIVLPVIGAIVVGLCLVGMGVYKIRLRCQSSGYQRI.

Residues 1 to 27 (MPRQLSAAAVLFASLAVILHDGSQMRA) form the signal peptide. The Lumenal segment spans residues 28–381 (KAFPKTRDYS…NVDECSSDYT (354 aa)). The interval 135–217 (PPTITPPAHT…ASTVPGSTLA (83 aa)) is disordered. Over residues 142–170 (AHTTGTSSSTVNHTTGNATQPSNQTTLPA) the composition is skewed to polar residues. Low complexity predominate over residues 188 to 208 (PTHAPGTTAAAHNTTRTAAPA). Residue Asn200 is glycosylated (N-linked (GlcNAc...) asparagine). Cysteines 237 and 274 form a disulfide. A glycan (N-linked (GlcNAc...) asparagine) is linked at Asn291. Cys339 and Cys376 form a disulfide bridge. Residues 382–402 (IVLPVIGAIVVGLCLVGMGVY) traverse the membrane as a helical segment. The Cytoplasmic portion of the chain corresponds to 403-416 (KIRLRCQSSGYQRI).

This sequence belongs to the LAMP family. Monomer. Interacts with FURIN.

It is found in the cell surface. The protein localises to the lysosome membrane. Its subcellular location is the cytoplasmic vesicle membrane. It localises to the early endosome membrane. Lysosomal membrane glycoprotein which plays a role in the unfolded protein response (UPR) that contributes to protein degradation and cell survival during proteasomal dysfunction. Plays a role in the process of fusion of the lysosome with the autophagosome, thereby modulating the autophagic process. Promotes hepatocellular lipogenesis through activation of the PI3K/Akt pathway. May also play a role in dendritic cell function and in adaptive immunity. The sequence is that of Lysosome-associated membrane glycoprotein 3 (LAMP3) from Macaca mulatta (Rhesus macaque).